The following is a 444-amino-acid chain: Alpha-1,3-mannosyl-glycoprotein 2-beta-N-acetylglucosaminyltransferase (444 aa).

Over 1–6 the chain is Cytoplasmic; it reads MARISC. A helical; Signal-anchor for type II membrane protein membrane pass occupies residues 7–24; it reads DLRFLLIPAAFMFIYIQM. Over 25 to 444 the chain is Lumenal; it reads RLFQTQSQYA…SVMQLGIRNS (420 aa). The stretch at 61-92 forms a coiled coil; the sequence is KQSRIVALEDMKNRQDEELVQLKDLIQTFEKK. Substrate is bound by residues arginine 115, aspartate 144, histidine 188, and aspartate 210. Aspartate 211 serves as a coordination point for Mn(2+). The Proton acceptor role is filled by aspartate 287. Serine 318 provides a ligand contact to substrate. The N-linked (GlcNAc...) asparagine glycan is linked to asparagine 351.

It belongs to the glycosyltransferase 13 family. It depends on Mn(2+) as a cofactor. In terms of processing, glycosylated. Expressed in roots, stems, leaves and flowers.

It is found in the golgi apparatus membrane. It carries out the reaction N(4)-(alpha-D-Man-(1-&gt;3)-[alpha-D-Man-(1-&gt;3)-[alpha-D-Man-(1-&gt;6)]-alpha-D-Man-(1-&gt;6)]-beta-D-Man-(1-&gt;4)-beta-D-GlcNAc-(1-&gt;4)-beta-D-GlcNAc)-L-asparaginyl-[protein] (N-glucan mannose isomer 5A1,2) + UDP-N-acetyl-alpha-D-glucosamine = N(4)-{beta-D-GlcNAc-(1-&gt;2)-alpha-D-Man-(1-&gt;3)-[alpha-D-Man-(1-&gt;3)-[alpha-D-Man-(1-&gt;6)]-alpha-D-Man-(1-&gt;6)]-beta-D-Man-(1-&gt;4)-beta-D-GlcNAc-(1-&gt;4)-beta-D-GlcNAc}-L-asparaginyl-[protein] + UDP + H(+). Its pathway is protein modification; protein glycosylation. In terms of biological role, initiates complex N-linked carbohydrate formation. Essential for the conversion of high-mannose to hybrid and complex N-glycans. Required for normal root growth and morphology. The protein is Alpha-1,3-mannosyl-glycoprotein 2-beta-N-acetylglucosaminyltransferase of Arabidopsis thaliana (Mouse-ear cress).